A 636-amino-acid chain; its full sequence is Putative ankyrin repeat protein L766 (636 aa).

ANK repeat units follow at residues 63 to 97 (NNYL…DYEL), 99 to 129 (STCH…YIDS), 130 to 159 (FGNI…FFNC), 161 to 190 (YYYL…KSNN), 230 to 259 (FDEK…NYDF), 261 to 284 (TIIN…YLTD), 322 to 355 (SRII…KTSI), 372 to 400 (NPDE…NIPD), 425 to 455 (DSLE…DTTI), 517 to 546 (NSIE…NDNN), and 548 to 575 (LSWA…DIYQ).

The protein is Putative ankyrin repeat protein L766 of Acanthamoeba polyphaga mimivirus (APMV).